The primary structure comprises 334 residues: Type II methyltransferase M.NlaIII (334 aa).

The protein belongs to the N(4)/N(6)-methyltransferase family.

The catalysed reaction is a 2'-deoxyadenosine in DNA + S-adenosyl-L-methionine = an N(6)-methyl-2'-deoxyadenosine in DNA + S-adenosyl-L-homocysteine + H(+). A methylase, recognizes the double-stranded sequence 5'-CATG-3', methylates A-2 on both strands and protects the DNA from cleavage by the NlaIII endonuclease. This Neisseria lactamica protein is Type II methyltransferase M.NlaIII (nlaIIIM).